The primary structure comprises 203 residues: Small ribosomal subunit protein uS4c (203 aa).

The region spanning 92-150 is the S4 RNA-binding domain; it reads MRLDNIIYRLGMAPTIANARQLVNHGHIVVNDRIVTIPSYRCKPKDIISVRNNSTSRNV.

Belongs to the universal ribosomal protein uS4 family. As to quaternary structure, part of the 30S ribosomal subunit. Contacts protein S5. The interaction surface between S4 and S5 is involved in control of translational fidelity.

It localises to the plastid. The protein resides in the chloroplast. In terms of biological role, one of the primary rRNA binding proteins, it binds directly to 16S rRNA where it nucleates assembly of the body of the 30S subunit. Functionally, with S5 and S12 plays an important role in translational accuracy. The protein is Small ribosomal subunit protein uS4c (rps4) of Chlorokybus atmophyticus (Soil alga).